We begin with the raw amino-acid sequence, 37 residues long: DLHIPPPDNKINWPQLSGGGGGSPKTGYDININAQQK.

The tract at residues 1–37 (DLHIPPPDNKINWPQLSGGGGGSPKTGYDININAQQK) is disordered.

The protein belongs to the attacin/sarcotoxin-2 family. Synthesized by the fat body and secreted into the hemolymph.

The protein localises to the secreted. In terms of biological role, acute phase protein with antibacterial activity against the Gram-negative bacteria E.coli (MIC=6.25 ug/ml) and S.sonnei (MIC=12.5 ug/ml). Lacks antibacterial activity against the Gram-negative bacteria P.vulgaris, P.rettgeri and P.aeruginosa, and against the Gram-positive bacteria B.subtilis, S.aureus, M.luteus, B.megaterium, C.bovis and E.cloacae. This Sarcophaga peregrina (Flesh fly) protein is Diptericin.